A 379-amino-acid chain; its full sequence is Tryptophan 2,3-dioxygenase (379 aa).

Substrate-binding positions include 57-61 (FIITH) and Arg-128. Residue His-312 participates in heme binding. Thr-327 lines the substrate pocket.

The protein belongs to the tryptophan 2,3-dioxygenase family. In terms of assembly, homotetramer. Dimer of dimers. Heme is required as a cofactor.

The enzyme catalyses L-tryptophan + O2 = N-formyl-L-kynurenine. It functions in the pathway amino-acid degradation; L-tryptophan degradation via kynurenine pathway; L-kynurenine from L-tryptophan: step 1/2. The protein operates within pigment biosynthesis; ommochrome biosynthesis. Its function is as follows. Heme-dependent dioxygenase that catalyzes the oxidative cleavage of the L-tryptophan (L-Trp) pyrrole ring and converts L-tryptophan to N-formyl-L-kynurenine. Catalyzes the oxidative cleavage of the indole moiety. The protein is Tryptophan 2,3-dioxygenase of Drosophila sechellia (Fruit fly).